The sequence spans 134 residues: Small ribosomal subunit protein uS11 (134 aa).

Belongs to the universal ribosomal protein uS11 family. Part of the 30S ribosomal subunit. Interacts with proteins S7 and S18. Binds to IF-3.

Functionally, located on the platform of the 30S subunit, it bridges several disparate RNA helices of the 16S rRNA. Forms part of the Shine-Dalgarno cleft in the 70S ribosome. In Paracidovorax citrulli (strain AAC00-1) (Acidovorax citrulli), this protein is Small ribosomal subunit protein uS11.